The sequence spans 230 residues: Large ribosomal subunit protein uL1c (230 aa).

The protein belongs to the universal ribosomal protein uL1 family. As to quaternary structure, part of the 50S ribosomal subunit.

It localises to the plastid. It is found in the chloroplast. Binds directly to 23S rRNA. Might be involved in E site tRNA release (Potential). This is Large ribosomal subunit protein uL1c (rpl1) from Thalassiosira pseudonana (Marine diatom).